Consider the following 227-residue polypeptide: UPF0173 metal-dependent hydrolase YtkL (227 aa).

Belongs to the UPF0173 family.

In Bacillus subtilis (strain 168), this protein is UPF0173 metal-dependent hydrolase YtkL (ytkL).